Reading from the N-terminus, the 234-residue chain is MEWNESLLRLTVAFVLGSTLGIERQWRQRMAGLRTNTLVAIGAALFVIVSVLTNHDSSPTRIPAQIVSGIGFLAGGVILKEGLTVKGLNTAATLWCSAAVGTLCGQGLFSEAVLGSMMVLVANIALRPLSTFINHQPMHSTELECHYLCHLVCRGDEEANVRRILLDSLAEIKNIKLRSLRSHDLDEFNHFVEVEAAIICTARKDKFLEAVISKLSLNPSVKSVSWQALEQESG.

The next 3 membrane-spanning stretches (helical) occupy residues 32-52 (GLRT…VSVL), 62-82 (IPAQ…LKEG), and 106-126 (QGLF…NIAL).

The protein belongs to the MgtC/SapB family.

The protein localises to the cell membrane. This is an uncharacterized protein from Synechocystis sp. (strain ATCC 27184 / PCC 6803 / Kazusa).